We begin with the raw amino-acid sequence, 488 residues long: Probable malate:quinone oxidoreductase (488 aa).

It belongs to the MQO family. Requires FAD as cofactor.

The enzyme catalyses (S)-malate + a quinone = a quinol + oxaloacetate. It functions in the pathway carbohydrate metabolism; tricarboxylic acid cycle; oxaloacetate from (S)-malate (quinone route): step 1/1. The chain is Probable malate:quinone oxidoreductase from Neisseria gonorrhoeae (strain ATCC 700825 / FA 1090).